We begin with the raw amino-acid sequence, 34 residues long: Photosystem II reaction center protein Psb30 (34 aa).

A helical transmembrane segment spans residues 7-27 (VAQLISLFLILTSGPAIIVLI).

The protein belongs to the Psb30/Ycf12 family. As to quaternary structure, PSII is composed of 1 copy each of membrane proteins PsbA, PsbB, PsbC, PsbD, PsbE, PsbF, PsbH, PsbI, PsbJ, PsbK, PsbL, PsbM, PsbT, PsbX, PsbY, PsbZ, Psb30/Ycf12, peripheral proteins of the oxygen-evolving complex and a large number of cofactors. It forms dimeric complexes.

Its subcellular location is the plastid. The protein localises to the chloroplast thylakoid membrane. In terms of biological role, a core subunit of photosystem II (PSII), probably helps stabilize the reaction center. This chain is Photosystem II reaction center protein Psb30, found in Rhodomonas salina (Cryptomonas salina).